Consider the following 263-residue polypeptide: Oxidoreductase UcpA (263 aa).

Residue 10–32 coordinates NAD(+); it reads LITGALQGIGEGIARTFARHGAN. Serine 141 is a binding site for substrate. Tyrosine 155 acts as the Proton acceptor in catalysis.

This sequence belongs to the short-chain dehydrogenases/reductases (SDR) family.

The sequence is that of Oxidoreductase UcpA (ucpA) from Escherichia coli O157:H7.